Reading from the N-terminus, the 169-residue chain is UPF0065 protein in clcB-clcD intergenic region (169 aa).

The protein belongs to the UPF0065 (bug) family.

It is found in the periplasm. The protein is UPF0065 protein in clcB-clcD intergenic region of Pseudomonas knackmussii (strain DSM 6978 / CCUG 54928 / LMG 23759 / B13).